Reading from the N-terminus, the 257-residue chain is Zinc import ATP-binding protein ZnuC (257 aa).

Positions 6–221 (VRLEQITVAF…AFVETFGHQV (216 aa)) constitute an ABC transporter domain. 38–45 (GPNGAGKT) is an ATP binding site.

It belongs to the ABC transporter superfamily. Zinc importer (TC 3.A.1.15.5) family. In terms of assembly, the complex is composed of two ATP-binding proteins (ZnuC), two transmembrane proteins (ZnuB) and a solute-binding protein (ZnuA).

It is found in the cell inner membrane. It carries out the reaction Zn(2+)(out) + ATP(in) + H2O(in) = Zn(2+)(in) + ADP(in) + phosphate(in) + H(+)(in). In terms of biological role, part of the ABC transporter complex ZnuABC involved in zinc import. Responsible for energy coupling to the transport system. This is Zinc import ATP-binding protein ZnuC from Marinobacter nauticus (strain ATCC 700491 / DSM 11845 / VT8) (Marinobacter aquaeolei).